Consider the following 470-residue polypeptide: Proton-coupled amino acid transporter 3 (470 aa).

Residues Met1–Gln46 are Cytoplasmic-facing. Positions Ser10–Gln20 are enriched in polar residues. Residues Ser10–Asn33 form a disordered region. A compositionally biased stretch (low complexity) spans Ser21 to Ser31. Residues Thr47–Ile67 traverse the membrane as a helical segment. Topologically, residues Lys68–Gly71 are extracellular. Residues Leu72–Ile92 traverse the membrane as a helical segment. Residues Leu93–Thr137 are Cytoplasmic-facing. Residues Val138–Ala158 traverse the membrane as a helical segment. The Extracellular segment spans residues Asp159–Pro185. Residues Ile186–Ile206 traverse the membrane as a helical segment. Residues Gln207–Lys210 lie on the Cytoplasmic side of the membrane. Residues Val211–Phe231 form a helical membrane-spanning segment. Residues Glu232–Thr252 are Extracellular-facing. Residues Phe253–Leu273 traverse the membrane as a helical segment. The Cytoplasmic segment spans residues Lys274–Ser284. The chain crosses the membrane as a helical span at residues Phe285 to Gly305. Residues Tyr306–Gly337 are Extracellular-facing. A helical transmembrane segment spans residues Ile338 to Ile358. At Ser359–Leu367 the chain is on the cytoplasmic side. A helical membrane pass occupies residues Phe368–Ile388. Over Pro389–Asp392 the chain is Extracellular. The helical transmembrane segment at Leu393–Leu413 threads the bilayer. At Leu414–Ser425 the chain is on the cytoplasmic side. A helical membrane pass occupies residues Cys426 to Gly446. Topologically, residues Thr447 to Ala470 are extracellular.

Belongs to the amino acid/polyamine transporter 2 family. As to expression, specifically expressed in testis.

Its subcellular location is the membrane. In Homo sapiens (Human), this protein is Proton-coupled amino acid transporter 3 (SLC36A3).